A 391-amino-acid chain; its full sequence is S-adenosylmethionine synthase (391 aa).

Histidine 19 is a binding site for ATP. Aspartate 21 provides a ligand contact to Mg(2+). Glutamate 47 contributes to the K(+) binding site. The L-methionine site is built by glutamate 60 and glutamine 103. The tract at residues 103–113 is flexible loop; it reads QSADIAQGVDR. ATP contacts are provided by residues 168–170, 236–237, aspartate 245, 251–252, alanine 268, and lysine 272; these read DGK, RF, and RK. Aspartate 245 is a binding site for L-methionine. Position 276 (lysine 276) interacts with L-methionine.

Belongs to the AdoMet synthase family. In terms of assembly, homotetramer; dimer of dimers. Mg(2+) serves as cofactor. K(+) is required as a cofactor.

It localises to the cytoplasm. The enzyme catalyses L-methionine + ATP + H2O = S-adenosyl-L-methionine + phosphate + diphosphate. It functions in the pathway amino-acid biosynthesis; S-adenosyl-L-methionine biosynthesis; S-adenosyl-L-methionine from L-methionine: step 1/1. Its function is as follows. Catalyzes the formation of S-adenosylmethionine (AdoMet) from methionine and ATP. The overall synthetic reaction is composed of two sequential steps, AdoMet formation and the subsequent tripolyphosphate hydrolysis which occurs prior to release of AdoMet from the enzyme. The polypeptide is S-adenosylmethionine synthase (Nitratidesulfovibrio vulgaris (strain ATCC 29579 / DSM 644 / CCUG 34227 / NCIMB 8303 / VKM B-1760 / Hildenborough) (Desulfovibrio vulgaris)).